The primary structure comprises 467 residues: 3-isopropylmalate dehydratase large subunit (467 aa).

[4Fe-4S] cluster-binding residues include Cys-347, Cys-407, and Cys-410.

This sequence belongs to the aconitase/IPM isomerase family. LeuC type 1 subfamily. Heterodimer of LeuC and LeuD. Requires [4Fe-4S] cluster as cofactor.

The catalysed reaction is (2R,3S)-3-isopropylmalate = (2S)-2-isopropylmalate. It participates in amino-acid biosynthesis; L-leucine biosynthesis; L-leucine from 3-methyl-2-oxobutanoate: step 2/4. Functionally, catalyzes the isomerization between 2-isopropylmalate and 3-isopropylmalate, via the formation of 2-isopropylmaleate. The protein is 3-isopropylmalate dehydratase large subunit of Synechococcus sp. (strain JA-2-3B'a(2-13)) (Cyanobacteria bacterium Yellowstone B-Prime).